Reading from the N-terminus, the 329-residue chain is Acrosin (329 aa).

Residues 1–17 (MLPTAVLLVLAVSVVAR) form the signal peptide. The N-linked (GlcNAc...) asparagine glycan is linked to Asn-19. Intrachain disulfides connect Cys-22–Cys-152, Cys-26–Cys-160, Cys-71–Cys-87, Cys-175–Cys-244, Cys-207–Cys-223, and Cys-234–Cys-264. Residues 40 to 288 (IIGGQDAAHG…YLNWIASKIG (249 aa)) form the Peptidase S1 domain. Catalysis depends on charge relay system residues His-86 and Asp-140. Asn-208 carries an N-linked (GlcNAc...) asparagine glycan. The active-site Charge relay system is the Ser-238.

This sequence belongs to the peptidase S1 family. In terms of assembly, heavy chain (catalytic) and a light chain linked by two disulfide bonds. Forms a heterodimer with SERPINA5.

It catalyses the reaction Preferential cleavage: Arg-|-Xaa, Lys-|-Xaa.. With respect to regulation, inhibited by SERPINA5. Acrosin is the major protease of mammalian spermatozoa. It is a serine protease of trypsin-like cleavage specificity, it is synthesized in a zymogen form, proacrosin and stored in the acrosome. The chain is Acrosin (ACR) from Ovis aries (Sheep).